A 533-amino-acid polypeptide reads, in one-letter code: Peptide chain release factor 3 (533 aa).

Residues 10 to 278 (EKRRTFAIIS…TFVEIAPPPQ (269 aa)) form the tr-type G domain. GTP is bound by residues 19 to 26 (SHPDAGKT), 87 to 91 (DTPGH), and 141 to 144 (NKMD).

This sequence belongs to the TRAFAC class translation factor GTPase superfamily. Classic translation factor GTPase family. PrfC subfamily.

The protein resides in the cytoplasm. Increases the formation of ribosomal termination complexes and stimulates activities of RF-1 and RF-2. It binds guanine nucleotides and has strong preference for UGA stop codons. It may interact directly with the ribosome. The stimulation of RF-1 and RF-2 is significantly reduced by GTP and GDP, but not by GMP. In Salinibacter ruber (strain DSM 13855 / M31), this protein is Peptide chain release factor 3.